The chain runs to 66 residues: Photosystem II reaction center protein H (66 aa).

A helical membrane pass occupies residues 27 to 47; it reads GAVPVMTVIGLLLLVFLVILL.

Belongs to the PsbH family. As to quaternary structure, PSII is composed of 1 copy each of membrane proteins PsbA, PsbB, PsbC, PsbD, PsbE, PsbF, PsbH, PsbI, PsbJ, PsbK, PsbL, PsbM, PsbT, PsbX, PsbY, Psb30/Ycf12, peripheral proteins PsbO, CyanoQ (PsbQ), PsbU, PsbV and a large number of cofactors. It forms dimeric complexes.

The protein resides in the cellular thylakoid membrane. One of the components of the core complex of photosystem II (PSII), required for its stability and/or assembly. PSII is a light-driven water:plastoquinone oxidoreductase that uses light energy to abstract electrons from H(2)O, generating O(2) and a proton gradient subsequently used for ATP formation. It consists of a core antenna complex that captures photons, and an electron transfer chain that converts photonic excitation into a charge separation. The chain is Photosystem II reaction center protein H from Prochlorococcus marinus (strain MIT 9215).